We begin with the raw amino-acid sequence, 180 residues long: Acireductone dioxygenase (180 aa).

Fe(2+) contacts are provided by H97, H99, E103, and H141. Positions 97, 99, 103, and 141 each coordinate Ni(2+).

The protein belongs to the acireductone dioxygenase (ARD) family. As to quaternary structure, monomer. The cofactor is Fe(2+). Requires Ni(2+) as cofactor.

The enzyme catalyses 1,2-dihydroxy-5-(methylsulfanyl)pent-1-en-3-one + O2 = 3-(methylsulfanyl)propanoate + CO + formate + 2 H(+). It carries out the reaction 1,2-dihydroxy-5-(methylsulfanyl)pent-1-en-3-one + O2 = 4-methylsulfanyl-2-oxobutanoate + formate + 2 H(+). The protein operates within amino-acid biosynthesis; L-methionine biosynthesis via salvage pathway; L-methionine from S-methyl-5-thio-alpha-D-ribose 1-phosphate: step 5/6. Catalyzes 2 different reactions between oxygen and the acireductone 1,2-dihydroxy-3-keto-5-methylthiopentene (DHK-MTPene) depending upon the metal bound in the active site. Fe-containing acireductone dioxygenase (Fe-ARD) produces formate and 2-keto-4-methylthiobutyrate (KMTB), the alpha-ketoacid precursor of methionine in the methionine recycle pathway. Ni-containing acireductone dioxygenase (Ni-ARD) produces methylthiopropionate, carbon monoxide and formate, and does not lie on the methionine recycle pathway. In Yersinia pseudotuberculosis serotype O:3 (strain YPIII), this protein is Acireductone dioxygenase.